The chain runs to 415 residues: MKFLVWGLGRSGKGALKLLKERGFEVYAGDDSQNPELWREVLGEVDTVVLSPGIPPSHPLWKEALKKEKEVVGELELAYRFFKGKVIAITGTDGKSTTTRLTYLILKKFFDEVFEAGNIGKPFSEVVLENPEGIAVLEVSSFQGKTLKTFRPNIGAFISFSVDHLDWHPSIEDYLKSKYRIFENQTEEDFLILNDLVYEIKKTPSRARKVLFSELYINSDSVFYKDIRLFNPKNLKIRGLHNVYNASVASLIALTLGLKPEDFEEVIYEFRGLPHRLEFLGNFNGVEVYNDSKSTTPHALMHALKTFPDNSVILIVGGKDKGADFYSLRHIVQKKVKIALAIGETKEKIKDSWKDITEVKTCNTLEEAVKLAREVSKLGNVVLFSPACSSFDMFRNYEERGEKFKELVEIWFTRT.

91 to 97 (GTDGKST) serves as a coordination point for ATP.

Belongs to the MurCDEF family.

It is found in the cytoplasm. The enzyme catalyses UDP-N-acetyl-alpha-D-muramoyl-L-alanine + D-glutamate + ATP = UDP-N-acetyl-alpha-D-muramoyl-L-alanyl-D-glutamate + ADP + phosphate + H(+). Its pathway is cell wall biogenesis; peptidoglycan biosynthesis. Its function is as follows. Cell wall formation. Catalyzes the addition of glutamate to the nucleotide precursor UDP-N-acetylmuramoyl-L-alanine (UMA). The sequence is that of UDP-N-acetylmuramoylalanine--D-glutamate ligase from Aquifex aeolicus (strain VF5).